The sequence spans 615 residues: Zinc finger protein 181 (615 aa).

A KRAB domain is found at 48–120 (VTFSDVAIDF…EKKLSKGLIP (73 aa)). Residues lysine 153 and lysine 170 each participate in a glycyl lysine isopeptide (Lys-Gly) (interchain with G-Cter in SUMO2) cross-link. 11 consecutive C2H2-type zinc fingers follow at residues 281–303 (YTCSECGKAFGKQSILNRHWRIH), 309–331 (YECRECGKTFSHGSSLTRHLISH), 337–359 (YKCIECGKAFSHVSSLTNHQSTH), 365–387 (YECMNCGKSFSRVSHLIEHLRIH), 393–415 (YECRICGKAFIHRSSLIHHQKIH), 421–443 (YECRECGKAFCCSSHLTRHQRIH), 449–471 (YECNKCLKVFSSLSFLVQHQSIH), 477–499 (FECQKCRKSFNQLESLNMHLRNH), 505–527 (YECSICGKAFSHRSSLLQHHRIH), 533–555 (YECIKCGKTFSCSSNLTVHQRIH), and 561–583 (YKCNECGKAFSKGSNLTAHQRVH).

The protein belongs to the krueppel C2H2-type zinc-finger protein family.

The protein resides in the nucleus. May be involved in transcriptional regulation. In Pongo abelii (Sumatran orangutan), this protein is Zinc finger protein 181 (ZNF181).